A 305-amino-acid chain; its full sequence is GTPase Era (305 aa).

The Era-type G domain occupies 13–181; it reads RCGFVAIVGR…ESAVGRFLPE (169 aa). The G1 stretch occupies residues 21 to 28; it reads GRPNVGKS. 21 to 28 provides a ligand contact to GTP; it reads GRPNVGKS. A G2 region spans residues 47 to 51; the sequence is QTTRH. The segment at 68-71 is G3; sequence DTPG. GTP contacts are provided by residues 68–72 and 130–133; these read DTPGM and NKVD. The G4 stretch occupies residues 130 to 133; that stretch reads NKVD. A G5 region spans residues 160-162; it reads LSA. Residues 204-288 form the KH type-2 domain; it reads VREKITRQLG…MLRLWVKVKR (85 aa).

This sequence belongs to the TRAFAC class TrmE-Era-EngA-EngB-Septin-like GTPase superfamily. Era GTPase family. Monomer.

Its subcellular location is the cytoplasm. It is found in the cell inner membrane. An essential GTPase that binds both GDP and GTP, with rapid nucleotide exchange. Plays a role in 16S rRNA processing and 30S ribosomal subunit biogenesis and possibly also in cell cycle regulation and energy metabolism. This is GTPase Era from Marinobacter nauticus (strain ATCC 700491 / DSM 11845 / VT8) (Marinobacter aquaeolei).